The primary structure comprises 179 residues: Large ribosomal subunit protein uL5 (179 aa).

The protein belongs to the universal ribosomal protein uL5 family. As to quaternary structure, part of the 50S ribosomal subunit; part of the 5S rRNA/L5/L18/L25 subcomplex. Contacts the 5S rRNA and the P site tRNA. Forms a bridge to the 30S subunit in the 70S ribosome.

In terms of biological role, this is one of the proteins that bind and probably mediate the attachment of the 5S RNA into the large ribosomal subunit, where it forms part of the central protuberance. In the 70S ribosome it contacts protein S13 of the 30S subunit (bridge B1b), connecting the 2 subunits; this bridge is implicated in subunit movement. Contacts the P site tRNA; the 5S rRNA and some of its associated proteins might help stabilize positioning of ribosome-bound tRNAs. The polypeptide is Large ribosomal subunit protein uL5 (Synechococcus elongatus (strain ATCC 33912 / PCC 7942 / FACHB-805) (Anacystis nidulans R2)).